We begin with the raw amino-acid sequence, 362 residues long: NAD(P)H-quinone oxidoreductase subunit 1, chloroplastic (362 aa).

The next 8 membrane-spanning stretches (helical) occupy residues 29 to 49 (ILPI…IVWL), 103 to 123 (IAVI…HFVL), 128 to 148 (IGVF…LMAG), 164 to 184 (AAQS…ISLL), 202 to 222 (FFGW…ISSL), 247 to 267 (YSGI…LVSS), 303 to 323 (TMGI…SITI), and 342 to 362 (FLLP…LVSL).

This sequence belongs to the complex I subunit 1 family. As to quaternary structure, NDH is composed of at least 16 different subunits, 5 of which are encoded in the nucleus.

The protein localises to the plastid. It is found in the chloroplast thylakoid membrane. It carries out the reaction a plastoquinone + NADH + (n+1) H(+)(in) = a plastoquinol + NAD(+) + n H(+)(out). The enzyme catalyses a plastoquinone + NADPH + (n+1) H(+)(in) = a plastoquinol + NADP(+) + n H(+)(out). In terms of biological role, NDH shuttles electrons from NAD(P)H:plastoquinone, via FMN and iron-sulfur (Fe-S) centers, to quinones in the photosynthetic chain and possibly in a chloroplast respiratory chain. The immediate electron acceptor for the enzyme in this species is believed to be plastoquinone. Couples the redox reaction to proton translocation, and thus conserves the redox energy in a proton gradient. This is NAD(P)H-quinone oxidoreductase subunit 1, chloroplastic from Hordeum vulgare (Barley).